Here is a 414-residue protein sequence, read N- to C-terminus: MLRRLVISIMLGMVSALIVWLFHQAMLGLEWLLFSRTDGSLVAAAASITGWRRALTPALGGLAAGLLLWAYQRYQHRKPSAPTDYMEAIEIGDGRLDVSASLVKSLASLLVVSSGSAIGREGAMVLLAALFASVFAQRYAKPKEWKLWVACGAAAGMASAYHAPLAGSLFIAEILFGTLMLASLGPVVIAAVSALLTTNLLQGGQETLYQVQTLPSPWPVQYFLMALLGLMAGFSGPLFLKAMAASSHAFRSLNLLPPLQLALGGIIVGLLSLIFPEVWGNGYSVVQSLLTTPPGVLLIGGILICKLLAVLASSGSGAPGGVFTPTLFVGAALGMLCGQIFSLWPVLGDNIGLLMALTGMATLLAATTHAPIMAALMVCEMTGEYTLLPGLLLSCVIATTIARWLRPISVYRSH.

11 helical membrane passes run 5–25 (LVISIMLGMVSALIVWLFHQA), 54–74 (ALTPALGGLAAGLLLWAYQRY), 116–136 (SAIGREGAMVLLAALFASVFA), 147–167 (LWVACGAAAGMASAYHAPLAG), 169–189 (LFIAEILFGTLMLASLGPVVI), 220–240 (VQYFLMALLGLMAGFSGPLFL), 255–275 (LLPPLQLALGGIIVGLLSLIF), 292–312 (TPPGVLLIGGILICKLLAVLA), 327–347 (LFVGAALGMLCGQIFSLWPVL), 353–373 (LLMALTGMATLLAATTHAPIM), and 381–401 (MTGEYTLLPGLLLSCVIATTI).

It belongs to the chloride channel (TC 2.A.49) family. ClcB subfamily.

The protein localises to the cell inner membrane. Probably acts as an electrical shunt for an outwardly-directed proton pump that is linked to amino acid decarboxylation, as part of the extreme acid resistance (XAR) response. This is Voltage-gated ClC-type chloride channel ClcB from Yersinia pseudotuberculosis serotype O:1b (strain IP 31758).